Reading from the N-terminus, the 205-residue chain is Guanylate kinase (205 aa).

The region spanning 6–184 (GLLIVLSGPA…AVERIKAIVT (179 aa)) is the Guanylate kinase-like domain. 13-20 (GPAGVGKG) contributes to the ATP binding site.

Belongs to the guanylate kinase family.

The protein localises to the cytoplasm. It catalyses the reaction GMP + ATP = GDP + ADP. Essential for recycling GMP and indirectly, cGMP. This chain is Guanylate kinase, found in Shouchella clausii (strain KSM-K16) (Alkalihalobacillus clausii).